We begin with the raw amino-acid sequence, 356 residues long: Uroporphyrinogen decarboxylase (356 aa).

Residues 25-29 (RQAGR), Asp75, Tyr152, Thr207, and His326 each bind substrate.

The protein belongs to the uroporphyrinogen decarboxylase family. In terms of assembly, homodimer.

It localises to the cytoplasm. The catalysed reaction is uroporphyrinogen III + 4 H(+) = coproporphyrinogen III + 4 CO2. Its pathway is porphyrin-containing compound metabolism; protoporphyrin-IX biosynthesis; coproporphyrinogen-III from 5-aminolevulinate: step 4/4. Catalyzes the decarboxylation of four acetate groups of uroporphyrinogen-III to yield coproporphyrinogen-III. The polypeptide is Uroporphyrinogen decarboxylase (Magnetococcus marinus (strain ATCC BAA-1437 / JCM 17883 / MC-1)).